The chain runs to 103 residues: Large ribosomal subunit protein bL21 (103 aa).

Belongs to the bacterial ribosomal protein bL21 family. As to quaternary structure, part of the 50S ribosomal subunit. Contacts protein L20.

Its function is as follows. This protein binds to 23S rRNA in the presence of protein L20. This chain is Large ribosomal subunit protein bL21, found in Rhodococcus erythropolis (strain PR4 / NBRC 100887).